The sequence spans 676 residues: PAS domain-containing protein cky-1 (676 aa).

A compositionally biased stretch (low complexity) spans 45–72 (SALNNNSINVPNNNTMGMSSAGSSNGSN). The segment at 45 to 89 (SALNNNSINVPNNNTMGMSSAGSSNGSNLVNGQQRSTRGASKQRR) is disordered. Polar residues predominate over residues 73–84 (LVNGQQRSTRGA). Residues 76–89 (GQQRSTRGASKQRR) form a basic motif region. Residues 76–129 (GQQRSTRGASKQRRDQINVEIQKLRDLLPLSDLIKDRLFQLQVMSLGCIFIRKH) form the bHLH domain. The segment at 90–129 (DQINVEIQKLRDLLPLSDLIKDRLFQLQVMSLGCIFIRKH) is helix-loop-helix motif. A PAS domain is found at 165-215 (MLMVTRSGKILHVSDNASEYLGHSVEEIMCQGDSIYDLVDGRDHGAVQAEL). Residues 436–462 (FSCQDSPPPSEEQQPSSPQTPPFTEQP) form a disordered region.

As to quaternary structure, heterodimer; efficient DNA binding requires dimerization with another bHLH protein. Forms a heterodimer with ARNT homolog aha-1; binds DNA as heterodimer.

The protein localises to the nucleus. Its function is as follows. Transcription factor. Efficient DNA binding requires dimerization with another bHLH protein, such as ARNT homolog aha-1. Regulates transcription of target genes, probably acting in complex with aha-1. The protein is PAS domain-containing protein cky-1 of Caenorhabditis elegans.